The sequence spans 156 residues: MSVVLDTPVAVRRTAMDLLARREHGRVELTRKLRQRGATDELIELALDRLAEEGLLSEARYLESFIRYRSNAGYGPARIREELGQRGLNRGDVDQALRDCGVNWAERLQDAWQRKYAGQRPHDPRSRAQQTRFLAYRGFPMDMIGRLLSGRDLDDY.

This sequence belongs to the RecX family.

The protein localises to the cytoplasm. Modulates RecA activity. The protein is Regulatory protein RecX of Pseudomonas putida (strain W619).